A 338-amino-acid chain; its full sequence is MSLQRRTTLTKYLIEQQRENNNLPADLRLLIEVVARACKAISYHVSKGALGDALGTAGSENVQGEVQKKLDILSNEILLEANEWGGNLAGMASEEMEQFFPIPANYPKGEYLLVFDPLDGSSNIDVNVSIGTIFSVLRCPDGQQPTEQSFLQKGTQQVAAGYAVYGPQTVLVLTTGNGVNCFTLDRELGSWVLTQSDMRIPVETREYAINASNQRHWYEPVQQYIGELNAGKDGPRQADFNMRWIASMVADVHRILNRGGIFMYPADKRDPSKPGKLRLMYEANPMSFIVEQAGGAATNGEKRILDIQPKSLHERVAVFLGSKNEVDRVTRYHLEKKS.

Mg(2+) contacts are provided by E94, D116, L118, and D119. Substrate-binding positions include 119 to 122 (DGSS), N210, and K276. E282 contributes to the Mg(2+) binding site.

It belongs to the FBPase class 1 family. In terms of assembly, homotetramer. It depends on Mg(2+) as a cofactor.

The protein localises to the cytoplasm. It catalyses the reaction beta-D-fructose 1,6-bisphosphate + H2O = beta-D-fructose 6-phosphate + phosphate. It functions in the pathway carbohydrate biosynthesis; gluconeogenesis. The sequence is that of Fructose-1,6-bisphosphatase class 1 1 from Paraburkholderia phymatum (strain DSM 17167 / CIP 108236 / LMG 21445 / STM815) (Burkholderia phymatum).